The following is a 522-amino-acid chain: Chromosomal replication initiator protein DnaA (522 aa).

Positions 1 to 71 are domain I, interacts with DnaA modulators; that stretch reads MQDFWHAASA…QSLACDYWEM (71 aa). The segment at 71–185 is domain II; the sequence is MQVDVQFVLD…PVDDTVHERS (115 aa). The tract at residues 186–402 is domain III, AAA+ region; that stretch reads RLNPILTFDN…GALRKILAYS (217 aa). 4 residues coordinate ATP: G230, G232, K233, and T234. The segment at 403–522 is domain IV, binds dsDNA; that stretch reads NFHGKEITIE…LHVLEQTLKG (120 aa).

The protein belongs to the DnaA family. As to quaternary structure, oligomerizes as a right-handed, spiral filament on DNA at oriC.

The protein localises to the cytoplasm. Functionally, plays an essential role in the initiation and regulation of chromosomal replication. ATP-DnaA binds to the origin of replication (oriC) to initiate formation of the DNA replication initiation complex once per cell cycle. Binds the DnaA box (a 9 base pair repeat at the origin) and separates the double-stranded (ds)DNA. Forms a right-handed helical filament on oriC DNA; dsDNA binds to the exterior of the filament while single-stranded (ss)DNA is stabiized in the filament's interior. The ATP-DnaA-oriC complex binds and stabilizes one strand of the AT-rich DNA unwinding element (DUE), permitting loading of DNA polymerase. After initiation quickly degrades to an ADP-DnaA complex that is not apt for DNA replication. Binds acidic phospholipids. This is Chromosomal replication initiator protein DnaA from Ralstonia nicotianae (strain ATCC BAA-1114 / GMI1000) (Ralstonia solanacearum).